Reading from the N-terminus, the 369-residue chain is Chaperone protein DnaJ (369 aa).

The 67-residue stretch at 7 to 73 (DYYEILGVPR…QKRAMYDRFG (67 aa)) folds into the J domain. A CR-type zinc finger spans residues 143–225 (GAEIPVEYER…CGGSGRVLRK (83 aa)). 8 residues coordinate Zn(2+): cysteine 156, cysteine 159, cysteine 173, cysteine 176, cysteine 199, cysteine 202, cysteine 213, and cysteine 216. 4 CXXCXGXG motif repeats span residues 156–163 (CPRCGGTG), 173–180 (CPSCGGTG), 199–206 (CERCGGTG), and 213–220 (CHECGGSG).

This sequence belongs to the DnaJ family. Homodimer. Zn(2+) serves as cofactor.

The protein localises to the cytoplasm. Functionally, participates actively in the response to hyperosmotic and heat shock by preventing the aggregation of stress-denatured proteins and by disaggregating proteins, also in an autonomous, DnaK-independent fashion. Unfolded proteins bind initially to DnaJ; upon interaction with the DnaJ-bound protein, DnaK hydrolyzes its bound ATP, resulting in the formation of a stable complex. GrpE releases ADP from DnaK; ATP binding to DnaK triggers the release of the substrate protein, thus completing the reaction cycle. Several rounds of ATP-dependent interactions between DnaJ, DnaK and GrpE are required for fully efficient folding. Also involved, together with DnaK and GrpE, in the DNA replication of plasmids through activation of initiation proteins. This is Chaperone protein DnaJ from Thermotoga petrophila (strain ATCC BAA-488 / DSM 13995 / JCM 10881 / RKU-1).